The chain runs to 120 residues: T-cell receptor beta chain V region PHDS203 (120 aa).

A signal peptide spans 1-11 (VVLCFLGTGLV). Residues 12 to 106 (DMKVTQMSRY…TSVYFCAQGA (95 aa)) form a v segment region. Cysteines 34 and 102 form a disulfide. Residues 107–120 (PEQYFGPGTRLTVL) form a j segment region.

The protein is T-cell receptor beta chain V region PHDS203 of Mus musculus (Mouse).